The primary structure comprises 506 residues: Galactose/methyl galactoside import ATP-binding protein MglA (506 aa).

2 ABC transporter domains span residues 14–249 (LEMS…VGRS) and 264–506 (VILE…SLHL). 46–53 (GENGAGKS) provides a ligand contact to ATP.

Belongs to the ABC transporter superfamily. Galactose/methyl galactoside importer (TC 3.A.1.2.3) family. As to quaternary structure, the complex is composed of one ATP-binding protein (MglA), two transmembrane proteins (MglC) and a solute-binding protein (MglB).

The protein localises to the cell inner membrane. It catalyses the reaction D-galactose(out) + ATP + H2O = D-galactose(in) + ADP + phosphate + H(+). The enzyme catalyses methyl beta-D-galactoside(out) + ATP + H2O = methyl beta-D-galactoside(in) + ADP + phosphate + H(+). Its function is as follows. Part of the ABC transporter complex MglABC involved in galactose/methyl galactoside import. Responsible for energy coupling to the transport system. In Escherichia coli (strain K12), this protein is Galactose/methyl galactoside import ATP-binding protein MglA.